A 228-amino-acid polypeptide reads, in one-letter code: Protein JAZ7 (228 aa).

A Tify domain is found at 101–136; sequence LSPNESTLTIFYMGEVHIFPGISPEKAELIIDLVSK. Positions 176-199 match the Jas motif; it reads MARRATLARFLEKRKHRLIKARPY. Residues 177 to 184 carry the Nuclear localization signal motif; it reads ARRATLAR.

Belongs to the TIFY/JAZ family. In terms of assembly, interacts with MYC2 (via N-terminus). JAZ7 competes with MED25 for binding to MYC2. Interacts with MTB1 (via N-terminus).

It is found in the nucleus. Repressor of jasmonate responses. This chain is Protein JAZ7, found in Solanum lycopersicum (Tomato).